Consider the following 41-residue polypeptide: Sucrose porin (41 aa).

A signal peptide spans 1–22 (MYRKSTLAMLIALLTSAASAHA).

Belongs to the porin LamB (TC 1.B.3) family. In terms of assembly, homotrimer.

The protein localises to the cell outer membrane. In terms of biological role, porin for sucrose uptake. The protein is Sucrose porin (scrY) of Salmonella thompson.